The sequence spans 636 residues: Signal recognition particle receptor subunit alpha (636 aa).

Disordered regions lie at residues 132–205, 217–246, and 280–314; these read APTT…ELSK, IQKH…APRV, and IRGT…TKGT. 2 stretches are compositionally biased toward basic and acidic residues: residues 137-146 and 153-165; these read KKFEDSEKAK and IETR…EKAK. Serine 177 carries the post-translational modification Phosphoserine. Basic and acidic residues predominate over residues 217–238; that stretch reads IQKHGKGLDKSSKSTKSDTPKE. Threonine 283 bears the Phosphothreonine mark. Residues serine 295, serine 296, and serine 297 each carry the phosphoserine modification. Residues 302 to 312 show a composition bias toward polar residues; the sequence is ATQNTKPSATK. A Phosphothreonine modification is found at threonine 303. The segment at 417–634 is NG domain; that stretch reads YVVTFCGVNG…NAKAVVAALM (218 aa). Residues 423–430 and 518–522 each bind GTP; these read GVNGVGKS and DTAGR. Residue threonine 576 is modified to Phosphothreonine. 586-589 lines the GTP pocket; the sequence is TKFD.

The protein belongs to the GTP-binding SRP family. In terms of assembly, heterodimer with SRPRB. Interacts with the signal recognition particle (SRP) complex subunit SRP54.

It is found in the endoplasmic reticulum membrane. Component of the SRP (signal recognition particle) receptor. Ensures, in conjunction with the signal recognition particle, the correct targeting of the nascent secretory proteins to the endoplasmic reticulum membrane system. Forms a guanosine 5'-triphosphate (GTP)-dependent complex with the SRP subunit SRP54. SRP receptor compaction and GTPase rearrangement drive SRP-mediated cotranslational protein translocation into the ER. This is Signal recognition particle receptor subunit alpha from Mus musculus (Mouse).